The following is a 306-amino-acid chain: Small ribosomal subunit biogenesis GTPase RsgA (306 aa).

In terms of domain architecture, CP-type G spans Lys-77–Leu-236. GTP-binding positions include Ser-126–Asp-129 and Gly-179–Thr-187. Residues Cys-260, Cys-266, His-268, and Cys-274 each coordinate Zn(2+).

It belongs to the TRAFAC class YlqF/YawG GTPase family. RsgA subfamily. As to quaternary structure, monomer. Associates with 30S ribosomal subunit, binds 16S rRNA. It depends on Zn(2+) as a cofactor.

The protein resides in the cytoplasm. Functionally, one of several proteins that assist in the late maturation steps of the functional core of the 30S ribosomal subunit. Helps release RbfA from mature subunits. May play a role in the assembly of ribosomal proteins into the subunit. Circularly permuted GTPase that catalyzes slow GTP hydrolysis, GTPase activity is stimulated by the 30S ribosomal subunit. This Onion yellows phytoplasma (strain OY-M) protein is Small ribosomal subunit biogenesis GTPase RsgA.